The sequence spans 136 residues: DNA-directed RNA polymerase subunit omega (136 aa).

Positions 81-136 (EAEAVPLLSSSPAAAAVAPQSSGDDGDIQFDRMSEEDLLRGLENLAPPTETEDEGD) are disordered. Residues 83-99 (EAVPLLSSSPAAAAVAP) show a composition bias toward low complexity. Positions 109–120 (QFDRMSEEDLLR) are enriched in basic and acidic residues.

It belongs to the RNA polymerase subunit omega family. In terms of assembly, the RNAP catalytic core consists of 2 alpha, 1 beta, 1 beta' and 1 omega subunit. When a sigma factor is associated with the core the holoenzyme is formed, which can initiate transcription.

It catalyses the reaction RNA(n) + a ribonucleoside 5'-triphosphate = RNA(n+1) + diphosphate. In terms of biological role, promotes RNA polymerase assembly. Latches the N- and C-terminal regions of the beta' subunit thereby facilitating its interaction with the beta and alpha subunits. This is DNA-directed RNA polymerase subunit omega from Methylobacterium nodulans (strain LMG 21967 / CNCM I-2342 / ORS 2060).